Reading from the N-terminus, the 708-residue chain is Polyribonucleotide nucleotidyltransferase (708 aa).

Positions 488 and 494 each coordinate Mg(2+). Residues 555 to 615 (PIIKVTKVDP…ENVDKAIELI (61 aa)) form the KH domain. The S1 motif domain occupies 625 to 692 (GEVLEGKVTR…DLGRLQFKRV (68 aa)).

Belongs to the polyribonucleotide nucleotidyltransferase family. It depends on Mg(2+) as a cofactor.

It is found in the cytoplasm. It carries out the reaction RNA(n+1) + phosphate = RNA(n) + a ribonucleoside 5'-diphosphate. Its function is as follows. Involved in mRNA degradation. Catalyzes the phosphorolysis of single-stranded polyribonucleotides processively in the 3'- to 5'-direction. This chain is Polyribonucleotide nucleotidyltransferase, found in Thermotoga petrophila (strain ATCC BAA-488 / DSM 13995 / JCM 10881 / RKU-1).